Reading from the N-terminus, the 428-residue chain is Cell division protein DamX (428 aa).

The tract at residues 1-99 (MDEFKPEDEL…KRKKAASKPA (99 aa)) is disordered. At 1 to 103 (MDEFKPEDEL…AASKPASRQY (103 aa)) the chain is on the cytoplasmic side. Basic and acidic residues-rich tracts occupy residues 7–36 (EDEL…ERGE) and 50–64 (DDRR…RNEE). Positions 55–87 (TRAQKERNEEPEIEEEIDESEDETVDEERVERR) form a coiled coil. A compositionally biased stretch (acidic residues) spans 65–82 (PEIEEEIDESEDETVDEE). Residues 86–95 (RRPRKRKKAA) are compositionally biased toward basic residues. A helical membrane pass occupies residues 104–124 (MMMGVGILVLLLLIIGIGSAL). The Periplasmic segment spans residues 125-428 (KAPSTTSSDQ…PLRQVQADLK (304 aa)). 2 disordered regions span residues 149–190 (TDQA…VATD) and 226–344 (EPAT…KSAP). Residues 236–257 (GNASRDTAKTQTAERPSTTRPA) show a composition bias toward polar residues. The segment covering 288–334 (PAAPVASTKAPAATSTPAPKETATTAPVQTASPAQTTATPAAGAKTA) has biased composition (low complexity). The SPOR domain maps to 342-419 (SAPSSHYTLQ…VQAKNPWAKP (78 aa)).

This sequence belongs to the DamX family. Interacts in vitro with multiple Fts proteins, including FtsQ and FtsN.

The protein localises to the cell inner membrane. Its function is as follows. Non-essential cell division protein. The sequence is that of Cell division protein DamX from Escherichia coli (strain K12).